Reading from the N-terminus, the 479-residue chain is Aspartyl/glutamyl-tRNA(Asn/Gln) amidotransferase subunit B (479 aa).

This sequence belongs to the GatB/GatE family. GatB subfamily. In terms of assembly, heterotrimer of A, B and C subunits.

The enzyme catalyses L-glutamyl-tRNA(Gln) + L-glutamine + ATP + H2O = L-glutaminyl-tRNA(Gln) + L-glutamate + ADP + phosphate + H(+). It catalyses the reaction L-aspartyl-tRNA(Asn) + L-glutamine + ATP + H2O = L-asparaginyl-tRNA(Asn) + L-glutamate + ADP + phosphate + 2 H(+). Functionally, allows the formation of correctly charged Asn-tRNA(Asn) or Gln-tRNA(Gln) through the transamidation of misacylated Asp-tRNA(Asn) or Glu-tRNA(Gln) in organisms which lack either or both of asparaginyl-tRNA or glutaminyl-tRNA synthetases. The reaction takes place in the presence of glutamine and ATP through an activated phospho-Asp-tRNA(Asn) or phospho-Glu-tRNA(Gln). The protein is Aspartyl/glutamyl-tRNA(Asn/Gln) amidotransferase subunit B of Geobacter sulfurreducens (strain ATCC 51573 / DSM 12127 / PCA).